The primary structure comprises 84 residues: Cell division topological specificity factor (84 aa).

This sequence belongs to the MinE family.

In terms of biological role, prevents the cell division inhibition by proteins MinC and MinD at internal division sites while permitting inhibition at polar sites. This ensures cell division at the proper site by restricting the formation of a division septum at the midpoint of the long axis of the cell. This chain is Cell division topological specificity factor, found in Cupriavidus taiwanensis (strain DSM 17343 / BCRC 17206 / CCUG 44338 / CIP 107171 / LMG 19424 / R1) (Ralstonia taiwanensis (strain LMG 19424)).